A 163-amino-acid polypeptide reads, in one-letter code: MFHVEKQSGDKEKDYQLLLKQLEAMTEDETDQIANYANASALLYHSLPEVNWAGFYFAKEEDGQLVLGPFQGLPACVRIPFGRGVCGTAYANGKVERIEDVNAFPGHIACDAASQSEIVLPIRVDGKIVGVLDIDSPVKNRFDEIDEKYLTQFAETLEKALAQ.

This sequence belongs to the free Met sulfoxide reductase family.

This Bacillus subtilis (strain 168) protein is Protein YtsP (ytsP).